The primary structure comprises 62 residues: Cytotoxin 6 (62 aa).

A signal peptide spans Tyr-1–Thr-2. 4 cysteine pairs are disulfide-bonded: Cys-5/Cys-23, Cys-16/Cys-40, Cys-44/Cys-55, and Cys-56/Cys-61.

This sequence belongs to the three-finger toxin family. Short-chain subfamily. Type IA cytotoxin sub-subfamily. As to quaternary structure, monomer in solution; Homodimer and oligomer in the presence of negatively charged lipids forming a pore with a size ranging between 20 and 30 Angstroms. As to expression, expressed by the venom gland.

It localises to the secreted. Its subcellular location is the target cell membrane. In terms of biological role, shows cytolytic activity on many different cells by forming pore in lipid membranes. In vivo, increases heart rate or kills the animal by cardiac arrest. In addition, it binds to heparin with high affinity, interacts with Kv channel-interacting protein 1 (KCNIP1) in a calcium-independent manner, and binds to integrin alpha-V/beta-3 (ITGAV/ITGB3) with moderate affinity. This chain is Cytotoxin 6, found in Naja sputatrix (Malayan spitting cobra).